The chain runs to 326 residues: uncharacterized protein (326 aa).

Solcar repeat units follow at residues 20-107 (QDSN…CKKK), 120-219 (LTNT…LREF), and 231-322 (KSNL…VCDS). The next 6 membrane-spanning stretches (helical) occupy residues 24 to 40 (IAFL…RTVV), 84 to 104 (GLNC…YEAC), 126 to 143 (LFSG…TYPL), 195 to 213 (VWPT…FAVY), 237 to 254 (LTIG…TYPF), and 297 to 316 (GLAA…WLVY).

The protein belongs to the mitochondrial carrier (TC 2.A.29) family.

The protein localises to the mitochondrion inner membrane. This is an uncharacterized protein from Saccharomyces cerevisiae (strain ATCC 204508 / S288c) (Baker's yeast).